The chain runs to 314 residues: Ribosomal protein L11 methyltransferase (314 aa).

Thr-164, Gly-185, Asp-207, and Asn-249 together coordinate S-adenosyl-L-methionine.

The protein belongs to the methyltransferase superfamily. PrmA family.

The protein resides in the cytoplasm. It carries out the reaction L-lysyl-[protein] + 3 S-adenosyl-L-methionine = N(6),N(6),N(6)-trimethyl-L-lysyl-[protein] + 3 S-adenosyl-L-homocysteine + 3 H(+). Its function is as follows. Methylates ribosomal protein L11. In Clostridium beijerinckii (strain ATCC 51743 / NCIMB 8052) (Clostridium acetobutylicum), this protein is Ribosomal protein L11 methyltransferase.